The sequence spans 327 residues: Biotin synthase (327 aa).

In terms of domain architecture, Radical SAM core spans 49 to 282 (FNKDKIDLCS…NKVIRLCGGR (234 aa)). 3 residues coordinate [4Fe-4S] cluster: cysteine 67, cysteine 71, and cysteine 74. 4 residues coordinate [2Fe-2S] cluster: serine 110, cysteine 142, cysteine 201, and arginine 277.

It belongs to the radical SAM superfamily. Biotin synthase family. Homodimer. [4Fe-4S] cluster is required as a cofactor. The cofactor is [2Fe-2S] cluster.

The catalysed reaction is (4R,5S)-dethiobiotin + (sulfur carrier)-SH + 2 reduced [2Fe-2S]-[ferredoxin] + 2 S-adenosyl-L-methionine = (sulfur carrier)-H + biotin + 2 5'-deoxyadenosine + 2 L-methionine + 2 oxidized [2Fe-2S]-[ferredoxin]. The protein operates within cofactor biosynthesis; biotin biosynthesis; biotin from 7,8-diaminononanoate: step 2/2. Its function is as follows. Catalyzes the conversion of dethiobiotin (DTB) to biotin by the insertion of a sulfur atom into dethiobiotin via a radical-based mechanism. The protein is Biotin synthase of Methanococcus maripaludis (strain C5 / ATCC BAA-1333).